The following is a 149-amino-acid chain: Protein FAM72A (149 aa).

Belongs to the FAM72 family. Interacts with UNG. As to expression, may be up-regulated in malignant colon cancers, compared to normal colon and colon adenomas. Expression is also elevated in other common cancer types, including breast, lung, uterus, and ovary.

The protein resides in the cytoplasm. It localises to the mitochondrion. Its function is as follows. May play a role in the regulation of cellular reactive oxygen species metabolism. May participate in cell growth regulation. The protein is Protein FAM72A (FAM72A) of Homo sapiens (Human).